Reading from the N-terminus, the 92-residue chain is Large ribosomal subunit protein uL23c (92 aa).

It belongs to the universal ribosomal protein uL23 family. In terms of assembly, part of the 50S ribosomal subunit.

It is found in the plastid. It localises to the chloroplast. Its function is as follows. Binds to 23S rRNA. The sequence is that of Large ribosomal subunit protein uL23c (rpl23) from Mesostigma viride (Green alga).